The chain runs to 417 residues: Origin of replication complex subunit 4 (417 aa).

Position 59 to 66 (59 to 66 (GPRGSGKA)) interacts with ATP.

It belongs to the ORC4 family. In terms of assembly, component of the origin recognition complex (ORC) composed of at least ORC1 (ORC1A or ORC1B), ORC2, ORC3, ORC4, ORC5 and ORC6. ORC is regulated in a cell-cycle and development dependent manner. It is sequentially assembled at the exit from anaphase of mitosis and disassembled as cells enter S phase. Interacts directly with ORC1A, ORC2, ORC3, ORC5 and ORC6. In terms of tissue distribution, follow a cell-cycle regulation with a peak at the G1/S-phase. Isoform AtORC4a is expressed at low levels ubiquitously. Isoform AtORC4b is mostly expressed in siliques, flowers and flower buds, and, to a lower exent, in roots, leaves and stems.

Its subcellular location is the nucleus. Its function is as follows. Component of the origin recognition complex (ORC) that binds origins of replication. DNA-binding is ATP-dependent. The specific DNA sequences that define origins of replication have not been identified yet. ORC is required to assemble the pre-replication complex necessary to initiate DNA replication. This Arabidopsis thaliana (Mouse-ear cress) protein is Origin of replication complex subunit 4.